The primary structure comprises 362 residues: Protein RecA (362 aa).

Residue 77-84 (GPESSGKT) participates in ATP binding.

It belongs to the RecA family.

It is found in the cytoplasm. Its function is as follows. Can catalyze the hydrolysis of ATP in the presence of single-stranded DNA, the ATP-dependent uptake of single-stranded DNA by duplex DNA, and the ATP-dependent hybridization of homologous single-stranded DNAs. It interacts with LexA causing its activation and leading to its autocatalytic cleavage. This is Protein RecA from Rhizobium etli (strain CIAT 652).